Here is a 560-residue protein sequence, read N- to C-terminus: Protein GAT2 (560 aa).

Disordered stretches follow at residues 274 to 297 (RQQE…FSNK), 345 to 383 (FLST…ISSS), and 412 to 461 (LNTK…SDEK). Low complexity predominate over residues 347–361 (STSSSSPSPTAGSAP). The segment covering 369–378 (RQDDPNDKKM) has biased composition (basic and acidic residues). A compositionally biased stretch (basic residues) spans 414–425 (TKKKNNRGRPRA). A compositionally biased stretch (polar residues) spans 428–456 (RQPTLTTSSHFINNSNPGAAAVSTTTPAA). The GATA-type zinc-finger motif lies at 472–497 (CFHCGETETPEWRKGPYGTRTLCNAC).

The protein is Protein GAT2 (GAT2) of Saccharomyces cerevisiae (strain ATCC 204508 / S288c) (Baker's yeast).